A 157-amino-acid polypeptide reads, in one-letter code: XylDLEGF operon transcriptional activator 2 (157 aa).

One can recognise an HTH araC/xylS-type domain in the interval 39–140 (ERVVQFIEEN…GELPSDTLSL (102 aa)). 2 DNA-binding regions (H-T-H motif) span residues 56–77 (EQLAELALMSPRSLYTMFEKHT) and 107–130 (ITEVALDYGFLHLGRFAEKYRSTF).

It is found in the cytoplasm. Functionally, regulatory protein of the TOL plasmid xyl operons. XylS activates the xylXYZLTEGFJQKIH operon required for the degradation of toluene, m-xylene and p-xylene. The protein is XylDLEGF operon transcriptional activator 2 (xylS2) of Pseudomonas putida (Arthrobacter siderocapsulatus).